The primary structure comprises 439 residues: Chromosomal replication initiator protein DnaA (439 aa).

A domain I, interacts with DnaA modulators region spans residues 1–72; that stretch reads MEQFSAFKLL…SKLYDDIRAV (72 aa). The tract at residues 72-99 is domain II; that stretch reads VRFVNEQDFFINLAKLEEDNRETLYQSS. The interval 100-322 is domain III, AAA+ region; the sequence is GLSKNFTFKN…GIATKLLFYV (223 aa). The ATP site is built by G144, G146, K147, and T148. Positions 323–439 are domain IV, binds dsDNA; it reads KTTKQNLINN…LQDIITSLVI (117 aa).

Belongs to the DnaA family. Oligomerizes as a right-handed, spiral filament on DNA at oriC.

The protein resides in the cytoplasm. In terms of biological role, plays an essential role in the initiation and regulation of chromosomal replication. ATP-DnaA binds to the origin of replication (oriC) to initiate formation of the DNA replication initiation complex once per cell cycle. Binds the DnaA box (a 9 base pair repeat at the origin) and separates the double-stranded (ds)DNA. Forms a right-handed helical filament on oriC DNA; dsDNA binds to the exterior of the filament while single-stranded (ss)DNA is stabiized in the filament's interior. The ATP-DnaA-oriC complex binds and stabilizes one strand of the AT-rich DNA unwinding element (DUE), permitting loading of DNA polymerase. After initiation quickly degrades to an ADP-DnaA complex that is not apt for DNA replication. Binds acidic phospholipids. The polypeptide is Chromosomal replication initiator protein DnaA (Mycoplasma pneumoniae (strain ATCC 29342 / M129 / Subtype 1) (Mycoplasmoides pneumoniae)).